The chain runs to 299 residues: Probable phosphate butyryltransferase (299 aa).

Belongs to the phosphate acetyltransferase and butyryltransferase family.

It catalyses the reaction butanoyl-CoA + phosphate = butanoyl phosphate + CoA. Catalyzes the conversion of butyryl-CoA through butyryl phosphate to butyrate. This is Probable phosphate butyryltransferase (yqiS) from Bacillus subtilis (strain 168).